We begin with the raw amino-acid sequence, 282 residues long: Pantothenate synthetase (282 aa).

ATP is bound at residue 30–37 (MGYFHEGH). Catalysis depends on His-37, which acts as the Proton donor. Gln-61 is a binding site for (R)-pantoate. Beta-alanine is bound at residue Gln-61. 147-150 (GQKD) is a binding site for ATP. Gln-153 contributes to the (R)-pantoate binding site. Residues Val-176 and 184–187 (LSSR) each bind ATP.

This sequence belongs to the pantothenate synthetase family. In terms of assembly, homodimer.

Its subcellular location is the cytoplasm. The enzyme catalyses (R)-pantoate + beta-alanine + ATP = (R)-pantothenate + AMP + diphosphate + H(+). The protein operates within cofactor biosynthesis; (R)-pantothenate biosynthesis; (R)-pantothenate from (R)-pantoate and beta-alanine: step 1/1. Functionally, catalyzes the condensation of pantoate with beta-alanine in an ATP-dependent reaction via a pantoyl-adenylate intermediate. The protein is Pantothenate synthetase of Maridesulfovibrio salexigens (strain ATCC 14822 / DSM 2638 / NCIMB 8403 / VKM B-1763) (Desulfovibrio salexigens).